The chain runs to 429 residues: Probable imidazolonepropionase (429 aa).

Residues Y161 and H194 each coordinate 4-imidazolone-5-propanoate. N-formimidoyl-L-glutamate is bound at residue Y161. H262 is a binding site for Fe(3+). H262 contacts Zn(2+). Position 265 (E265) interacts with 4-imidazolone-5-propanoate. Residue D336 participates in Fe(3+) binding. D336 provides a ligand contact to Zn(2+). Residue N338 coordinates N-formimidoyl-L-glutamate.

The protein belongs to the metallo-dependent hydrolases superfamily. HutI family. Requires Zn(2+) as cofactor. The cofactor is Fe(3+).

The catalysed reaction is 4-imidazolone-5-propanoate + H2O = N-formimidoyl-L-glutamate. The protein operates within amino-acid degradation; L-histidine degradation into L-glutamate; N-formimidoyl-L-glutamate from L-histidine: step 3/3. The chain is Probable imidazolonepropionase (amdhd1) from Nematostella vectensis (Starlet sea anemone).